The chain runs to 372 residues: MSKKDYYDLLEVGRNASIDEIKKAYKKLALKYHPDRNPGNQEAEEKFKEVTAAYEVLSDSEKRAGYDRYGHEGASGGFQGFSSAGDFSDIFNDFFGGGFGGGASRSRAKRSTTGVSGADLRYDLEITLEDAFKGIQAPIHYVTNVKCDTCQGTGGEGAIKPVQCHTCQGSGRIRTQQGFFTIERTCTTCYGEGEIIQNKCKKCGGSGRRRDEVNISVSIPKGIEEGAKVRISGKGEAGTKGGKSGDLYVYVKIIFHKIFARNKADLHCKVPIRMTLAVLGGEIDIQSIDGAKIKVKVPEGTQTGTKLRCREKGMPYMNSHARGDLYVQVIVETLNPKNLTKKQIELLKALEEEENASVQQQSEGFFSKVKKK.

In terms of domain architecture, J spans 5-70 (DYYDLLEVGR…EKRAGYDRYG (66 aa)). A CR-type zinc finger spans residues 134–212 (GIQAPIHYVT…CGGSGRRRDE (79 aa)). Residues Cys-147, Cys-150, Cys-164, Cys-167, Cys-186, Cys-189, Cys-200, and Cys-203 each contribute to the Zn(2+) site. CXXCXGXG motif repeat units lie at residues 147–154 (CDTCQGTG), 164–171 (CHTCQGSG), 186–193 (CTTCYGEG), and 200–207 (CKKCGGSG).

Belongs to the DnaJ family. In terms of assembly, homodimer. Zn(2+) is required as a cofactor.

The protein resides in the cytoplasm. In terms of biological role, participates actively in the response to hyperosmotic and heat shock by preventing the aggregation of stress-denatured proteins and by disaggregating proteins, also in an autonomous, DnaK-independent fashion. Unfolded proteins bind initially to DnaJ; upon interaction with the DnaJ-bound protein, DnaK hydrolyzes its bound ATP, resulting in the formation of a stable complex. GrpE releases ADP from DnaK; ATP binding to DnaK triggers the release of the substrate protein, thus completing the reaction cycle. Several rounds of ATP-dependent interactions between DnaJ, DnaK and GrpE are required for fully efficient folding. Also involved, together with DnaK and GrpE, in the DNA replication of plasmids through activation of initiation proteins. This Wolbachia sp. subsp. Drosophila simulans (strain wRi) protein is Chaperone protein DnaJ.